A 293-amino-acid polypeptide reads, in one-letter code: ATP synthase gamma chain (293 aa).

It belongs to the ATPase gamma chain family. In terms of assembly, F-type ATPases have 2 components, CF(1) - the catalytic core - and CF(0) - the membrane proton channel. CF(1) has five subunits: alpha(3), beta(3), gamma(1), delta(1), epsilon(1). CF(0) has three main subunits: a, b and c.

Its subcellular location is the cell inner membrane. Produces ATP from ADP in the presence of a proton gradient across the membrane. The gamma chain is believed to be important in regulating ATPase activity and the flow of protons through the CF(0) complex. In Chlorobium chlorochromatii (strain CaD3), this protein is ATP synthase gamma chain.